The primary structure comprises 423 residues: Gamma-glutamyl phosphate reductase (423 aa).

This sequence belongs to the gamma-glutamyl phosphate reductase family.

The protein localises to the cytoplasm. The catalysed reaction is L-glutamate 5-semialdehyde + phosphate + NADP(+) = L-glutamyl 5-phosphate + NADPH + H(+). The protein operates within amino-acid biosynthesis; L-proline biosynthesis; L-glutamate 5-semialdehyde from L-glutamate: step 2/2. Its function is as follows. Catalyzes the NADPH-dependent reduction of L-glutamate 5-phosphate into L-glutamate 5-semialdehyde and phosphate. The product spontaneously undergoes cyclization to form 1-pyrroline-5-carboxylate. This chain is Gamma-glutamyl phosphate reductase, found in Paracoccus denitrificans (strain Pd 1222).